Here is a 231-residue protein sequence, read N- to C-terminus: Phosphoglycolate phosphatase (231 aa).

Catalysis depends on D9, which acts as the Nucleophile. 2 residues coordinate Mg(2+): D9 and D11. K154 serves as a coordination point for substrate. D177 and D181 together coordinate Mg(2+).

The protein belongs to the archaeal SPP-like hydrolase family. Mg(2+) is required as a cofactor.

It catalyses the reaction 2-phosphoglycolate + H2O = glycolate + phosphate. Catalyzes the dephosphorylation of 2-phosphoglycolate. The protein is Phosphoglycolate phosphatase of Nitrosopumilus maritimus (strain SCM1).